Reading from the N-terminus, the 312-residue chain is Transcription initiation factor IIB (312 aa).

The segment at 10–42 (FVQTCSDCGETQNIVEDYKNGYHVCGRCGCIVG) adopts a TFIIB-type zinc-finger fold. Zn(2+)-binding residues include cysteine 14, cysteine 17, cysteine 34, and cysteine 37. Repeat copies occupy residues 120–196 (FCER…LISP) and 213–290 (FCSD…ELLT).

The protein belongs to the TFIIB family. As to quaternary structure, associates with TFIID-IIA (DA complex) to form TFIID-IIA-IIB (DAB-complex) which is then recognized by polymerase II.

Its subcellular location is the nucleus. Functionally, general factor that plays a major role in the activation of eukaryotic genes transcribed by RNA polymerase II. This chain is Transcription initiation factor IIB, found in Encephalitozoon cuniculi (strain GB-M1) (Microsporidian parasite).